Consider the following 481-residue polypeptide: Cysteine--tRNA ligase (481 aa).

Cys29 contributes to the Zn(2+) binding site. A 'HIGH' region motif is present at residues 31 to 41 (VTVYDYCHIGH). Residues Cys209, His234, and Glu238 each contribute to the Zn(2+) site. Residues 266 to 270 (KMSKS) carry the 'KMSKS' region motif. Lys269 is an ATP binding site.

It belongs to the class-I aminoacyl-tRNA synthetase family. In terms of assembly, monomer. It depends on Zn(2+) as a cofactor.

Its subcellular location is the cytoplasm. It catalyses the reaction tRNA(Cys) + L-cysteine + ATP = L-cysteinyl-tRNA(Cys) + AMP + diphosphate. The sequence is that of Cysteine--tRNA ligase from Syntrophotalea carbinolica (strain DSM 2380 / NBRC 103641 / GraBd1) (Pelobacter carbinolicus).